We begin with the raw amino-acid sequence, 206 residues long: Protein GET1 (206 aa).

Topologically, residues 1-4 (MPSL) are lumenal. Residues 5–24 (LITALFLNVIIYVINTVGAA) traverse the membrane as a helical segment. At 25–110 (TVDGLLWLLY…TFDITIKIAR (86 aa)) the chain is on the cytoplasmic side. A coiled-coil region spans residues 75–100 (AKLRRRHDKALEAYEAKNNELTQSKS). The helical transmembrane segment at 111–131 (WAATSGLMLFLQFWYSKTPIF) threads the bilayer. The Lumenal segment spans residues 132–155 (TLPPGWIPWQVQWVLSFPRAPMGT). Residues 156–172 (VSIQIWSGACATVVALV) traverse the membrane as a helical segment. Over 173–206 (GDAMKASLAYVSKPKIDRIKLGATMEGKEGKKRQ) the chain is Cytoplasmic.

The protein belongs to the WRB/GET1 family. Interacts with GET3.

It is found in the endoplasmic reticulum membrane. Functionally, required for the post-translational delivery of tail-anchored (TA) proteins to the endoplasmic reticulum. Acts as a membrane receptor for soluble GET3, which recognizes and selectively binds the transmembrane domain of TA proteins in the cytosol. The sequence is that of Protein GET1 from Ajellomyces capsulatus (strain H143) (Darling's disease fungus).